Reading from the N-terminus, the 242-residue chain is MPDYIRISRAADSLRDIKITPHFLPHTDGSCLIECGNTKVICTASIDENVPPFLRGKNQGWVTAEYGMLPASTASRMRREASAGKQSGRTQEIQRLIGRSLRAVVDMEKLGERQILIDCDVIQADGGTRTASITGAFVALQIAVGKLVSDGILSENPIREAVAAVSVGVVNGVPLLDLDYPEDSGCDSDVNIVMTASGKIIEIQGTAEDAPFSLDELGKLVALAQKGIGELLQHQQNALSAA.

Phosphate-binding positions include Arg-89 and 127 to 129 (GTR).

Belongs to the RNase PH family. Homohexameric ring arranged as a trimer of dimers.

It catalyses the reaction tRNA(n+1) + phosphate = tRNA(n) + a ribonucleoside 5'-diphosphate. Functionally, phosphorolytic 3'-5' exoribonuclease that plays an important role in tRNA 3'-end maturation. Removes nucleotide residues following the 3'-CCA terminus of tRNAs; can also add nucleotides to the ends of RNA molecules by using nucleoside diphosphates as substrates, but this may not be physiologically important. Probably plays a role in initiation of 16S rRNA degradation (leading to ribosome degradation) during starvation. The sequence is that of Ribonuclease PH from Neisseria meningitidis serogroup A / serotype 4A (strain DSM 15465 / Z2491).